A 226-amino-acid polypeptide reads, in one-letter code: PKHD-type hydroxylase Bpet2704 (226 aa).

Positions 78 to 178 constitute a Fe2OG dioxygenase domain; that stretch reads KIFPPLFNRY…RISAFFWMQS (101 aa). 3 residues coordinate Fe cation: histidine 96, aspartate 98, and histidine 159. Arginine 169 contributes to the 2-oxoglutarate binding site.

The cofactor is Fe(2+). L-ascorbate is required as a cofactor.

In Bordetella petrii (strain ATCC BAA-461 / DSM 12804 / CCUG 43448), this protein is PKHD-type hydroxylase Bpet2704.